The sequence spans 155 residues: Probable calcium-binding protein CML9 (155 aa).

EF-hand domains lie at 8 to 43, 86 to 121, and 122 to 155; these read EQVD…LGQN, ATEK…HGDR, and LTEE…MNNK. 5 residues coordinate Ca(2+): D21, D23, D25, R27, and E32.

In terms of biological role, potential calcium sensor. This Oryza sativa subsp. japonica (Rice) protein is Probable calcium-binding protein CML9 (CML9).